We begin with the raw amino-acid sequence, 89 residues long: Small ribosomal subunit protein bS20 (89 aa).

Composition is skewed to basic residues over residues 1-10 and 17-29; these read MANIKSKIKS and ARKRNSMIKSRVK. The disordered stretch occupies residues 1–29; that stretch reads MANIKSKIKSIKTMEKARKRNSMIKSRVK.

This sequence belongs to the bacterial ribosomal protein bS20 family.

In terms of biological role, binds directly to 16S ribosomal RNA. This Mycoplasmopsis pulmonis (strain UAB CTIP) (Mycoplasma pulmonis) protein is Small ribosomal subunit protein bS20.